Consider the following 81-residue polypeptide: Exodeoxyribonuclease 7 small subunit (81 aa).

The interval 59–81 (KLVDKDGNEKTLDPQNASAPEEE) is disordered. The segment covering 60 to 70 (LVDKDGNEKTL) has biased composition (basic and acidic residues). A compositionally biased stretch (polar residues) spans 71-81 (DPQNASAPEEE).

This sequence belongs to the XseB family. As to quaternary structure, heterooligomer composed of large and small subunits.

The protein resides in the cytoplasm. It catalyses the reaction Exonucleolytic cleavage in either 5'- to 3'- or 3'- to 5'-direction to yield nucleoside 5'-phosphates.. In terms of biological role, bidirectionally degrades single-stranded DNA into large acid-insoluble oligonucleotides, which are then degraded further into small acid-soluble oligonucleotides. This Lactobacillus gasseri (strain ATCC 33323 / DSM 20243 / BCRC 14619 / CIP 102991 / JCM 1131 / KCTC 3163 / NCIMB 11718 / NCTC 13722 / AM63) protein is Exodeoxyribonuclease 7 small subunit.